We begin with the raw amino-acid sequence, 178 residues long: UPF0228 protein MA_4223 (178 aa).

It belongs to the UPF0228 family.

In Methanosarcina acetivorans (strain ATCC 35395 / DSM 2834 / JCM 12185 / C2A), this protein is UPF0228 protein MA_4223.